The chain runs to 404 residues: Putative Peroxidase 48 (404 aa).

The signal sequence occupies residues 1-18 (MRFLGDYKFALLTCSVIA). 4 disulfides stabilise this stretch: Cys77-Cys156, Cys110-Cys115, Cys162-Cys397, and Cys241-Cys273. His108 functions as the Proton acceptor in the catalytic mechanism. Residues Asp109, Ile112, Gly114, Asp116, and Ser118 each coordinate Ca(2+). N-linked (GlcNAc...) asparagine glycosylation occurs at Asn136. Pro204 contacts substrate. His234 serves as a coordination point for heme b. Residue Ser235 participates in Ca(2+) binding. Asn250 is a glycosylation site (N-linked (GlcNAc...) asparagine). The segment at 276-307 (SVSTSSPSAPPDIGLPPSLPASDSENSYGMSS) is disordered. Pro residues predominate over residues 283 to 294 (SAPPDIGLPPSL). Asp287 lines the Ca(2+) pocket. A compositionally biased stretch (polar residues) spans 296–307 (ASDSENSYGMSS).

Belongs to the peroxidase family. Classical plant (class III) peroxidase subfamily. It depends on heme b as a cofactor. Ca(2+) serves as cofactor.

It localises to the secreted. The catalysed reaction is 2 a phenolic donor + H2O2 = 2 a phenolic radical donor + 2 H2O. Functionally, removal of H(2)O(2), oxidation of toxic reductants, biosynthesis and degradation of lignin, suberization, auxin catabolism, response to environmental stresses such as wounding, pathogen attack and oxidative stress. These functions might be dependent on each isozyme/isoform in each plant tissue. The polypeptide is Putative Peroxidase 48 (PER48) (Arabidopsis thaliana (Mouse-ear cress)).